Consider the following 302-residue polypeptide: MSDSRLRRRQGTAGTDNKRRADGPHDISGLLDGVSVVLLDIEGTTTPITFVKDELFPYVCSHVRQHLEEHWKEEECQEDIAALRKQAKEDKEMDGVVLIPECTTKDDDEEARKKVLSAVVDNVLLNMDADRKVTALKQLQGHMWRAAYQTGKIKGEYVKLTFADVVPAIRGWLETGRQVYIYSSGSVEAQKLLFGFSTEGDLLELFSGHFDTTTGLKVETESYRRIAKTVGCDPANILFLTDVVREAKPSREAGMKTCLTVRPGNAPLTEEDWANYPVIKSFSELACDVSPTKMRSRGKAAT.

The span at 1–10 shows a compositional bias: basic residues; it reads MSDSRLRRRQ. The tract at residues 1–25 is disordered; the sequence is MSDSRLRRRQGTAGTDNKRRADGPH. Residues 16-25 are compositionally biased toward basic and acidic residues; that stretch reads DNKRRADGPH. Mg(2+)-binding residues include Asp-40 and Glu-42. Substrate contacts are provided by residues 183 to 184 and Lys-217; that span reads SS. A Mg(2+)-binding site is contributed by Asp-242.

The protein belongs to the HAD-like hydrolase superfamily. MasA/MtnC family. Monomer. The cofactor is Mg(2+).

It is found in the cytoplasm. The protein resides in the nucleus. The enzyme catalyses 5-methylsulfanyl-2,3-dioxopentyl phosphate + H2O = 1,2-dihydroxy-5-(methylsulfanyl)pent-1-en-3-one + phosphate. It participates in amino-acid biosynthesis; L-methionine biosynthesis via salvage pathway; L-methionine from S-methyl-5-thio-alpha-D-ribose 1-phosphate: step 3/6. Its pathway is amino-acid biosynthesis; L-methionine biosynthesis via salvage pathway; L-methionine from S-methyl-5-thio-alpha-D-ribose 1-phosphate: step 4/6. Its function is as follows. Bifunctional enzyme that catalyzes the enolization of 2,3-diketo-5-methylthiopentyl-1-phosphate (DK-MTP-1-P) into the intermediate 2-hydroxy-3-keto-5-methylthiopentenyl-1-phosphate (HK-MTPenyl-1-P), which is then dephosphorylated to form the acireductone 1,2-dihydroxy-3-keto-5-methylthiopentene (DHK-MTPene). The protein is Enolase-phosphatase E1 of Branchiostoma floridae (Florida lancelet).